Consider the following 593-residue polypeptide: Cryptochrome-2 (593 aa).

Residues 22–151 (ASSVHWFRKG…EVVTENSHTL (130 aa)) enclose the Photolyase/cryptochrome alpha/beta domain. Lys-30 participates in a covalent cross-link: Glycyl lysine isopeptide (Lys-Gly) (interchain with G-Cter in ubiquitin). Ser-90 carries the post-translational modification Phosphoserine. Glycyl lysine isopeptide (Lys-Gly) (interchain with G-Cter in ubiquitin) cross-links involve residues Lys-126 and Lys-242. Ser-266 is subject to Phosphoserine; by MAPK. Residue Ser-271 participates in FAD binding. At Ser-299 the chain carries Phosphoserine. Position 308 (Gln-308) interacts with FAD. Lys-348 is covalently cross-linked (Glycyl lysine isopeptide (Lys-Gly) (interchain with G-Cter in ubiquitin)). FAD is bound by residues His-374 and 406–408 (DAD). Positions 390-489 (WVSWESGVRV…IIGVDYPRPI (100 aa)) are required for inhibition of CLOCK-BMAL1-mediated transcription. Residues Lys-475 and Lys-504 each participate in a glycyl lysine isopeptide (Lys-Gly) (interchain with G-Cter in ubiquitin) cross-link. The disordered stretch occupies residues 532-593 (PVAEPSSSQA…PTPELPSKDA (62 aa)). Over residues 537–548 (SSSQAGSMSSAG) the composition is skewed to low complexity. A Phosphoserine; by GSK3-beta modification is found at Ser-554. Phosphoserine; by DYRK1A and MAPK is present on Ser-558.

It belongs to the DNA photolyase class-1 family. In terms of assembly, component of the circadian core oscillator, which includes the CRY proteins, CLOCK or NPAS2, BMAL1 or BMAL2, CSNK1D and/or CSNK1E, TIMELESS, and the PER proteins. Interacts with TIMELESS. Interacts directly with PER1, PER2 and PER3; interaction with PER2 inhibits its ubiquitination and vice versa. Interacts with CLOCK-BMAL1. Interacts with CLOCK. Interacts with BMAL1. Interacts with NFIL3. Interacts with FBXL3. Interacts with FBXL21. FBXL3, PER2 and the cofactor FAD compete for overlapping binding sites. FBXL3 cannot bind CRY2 that interacts already with PER2 or that contains bound FAD. Interacts with PPP5C (via TPR repeats); the interaction down-regulates the PPP5C phosphatase activity on CSNK1E. Interacts with nuclear receptors AR and NR3C1/GR; the interaction is ligand dependent. Interacts with PRKDC and CIART. Interacts with ISCA1 (in vitro). Interacts with DDB1, USP7 and TARDBP. Interacts with HNF4A. Interacts with PPARA. Interacts with PPARD (via domain NR LBD) and NR1I2 (via domain NR LBD) in a ligand-dependent manner. Interacts with PPARG, NR1I3 and VDR in a ligand-dependent manner. Requires FAD as cofactor. (6R)-5,10-methylene-5,6,7,8-tetrahydrofolate serves as cofactor. In terms of processing, phosphorylation on Ser-266 by MAPK is important for the inhibition of CLOCK-BMAL1-mediated transcriptional activity. Phosphorylation by CSKNE requires interaction with PER1 or PER2. Phosphorylated in a circadian manner at Ser-554 and Ser-558 in the suprachiasmatic nucleus (SCN) and liver. Phosphorylation at Ser-558 by DYRK1A promotes subsequent phosphorylation at Ser-554 by GSK3-beta: the two-step phosphorylation at the neighboring Ser residues leads to its proteasomal degradation. Post-translationally, ubiquitinated by the SCF(FBXL3) and SCF(FBXL21) complexes, regulating the balance between degradation and stabilization. The SCF(FBXL3) complex is mainly nuclear and mediates ubiquitination and subsequent degradation of CRY2. In contrast, cytoplasmic SCF(FBXL21) complex-mediated ubiquitination leads to stabilize CRY2 and counteract the activity of the SCF(FBXL3) complex. The SCF(FBXL3) and SCF(FBXL21) complexes probably mediate ubiquitination at different Lys residues. The SCF(FBXL3) complex recognizes and binds CRY2 phosphorylated at Ser-554 and Ser-558. Ubiquitination may be inhibited by PER2. Deubiquitinated by USP7. As to expression, expressed in all tissues examined including fetal brain, fibroblasts, heart, brain, placenta, lung, liver, skeletal muscle, kidney, pancreas, spleen, thymus, prostate, testis, ovary, small intestine, colon and leukocytes. Highest levels in heart and skeletal muscle.

It localises to the cytoplasm. The protein localises to the nucleus. With respect to regulation, KL001 (N-[3-(9H-carbazol-9-yl)-2-hydroxypropyl]-N-(2-furanylmethyl)-methanesulfonamide) binds to CRY1 and stabilizes it by inhibiting FBXL3- and ubiquitin-dependent degradation of CRY1 resulting in lengthening of the circadian periods. Its function is as follows. Transcriptional repressor which forms a core component of the circadian clock. The circadian clock, an internal time-keeping system, regulates various physiological processes through the generation of approximately 24 hour circadian rhythms in gene expression, which are translated into rhythms in metabolism and behavior. It is derived from the Latin roots 'circa' (about) and 'diem' (day) and acts as an important regulator of a wide array of physiological functions including metabolism, sleep, body temperature, blood pressure, endocrine, immune, cardiovascular, and renal function. Consists of two major components: the central clock, residing in the suprachiasmatic nucleus (SCN) of the brain, and the peripheral clocks that are present in nearly every tissue and organ system. Both the central and peripheral clocks can be reset by environmental cues, also known as Zeitgebers (German for 'timegivers'). The predominant Zeitgeber for the central clock is light, which is sensed by retina and signals directly to the SCN. The central clock entrains the peripheral clocks through neuronal and hormonal signals, body temperature and feeding-related cues, aligning all clocks with the external light/dark cycle. Circadian rhythms allow an organism to achieve temporal homeostasis with its environment at the molecular level by regulating gene expression to create a peak of protein expression once every 24 hours to control when a particular physiological process is most active with respect to the solar day. Transcription and translation of core clock components (CLOCK, NPAS2, BMAL1, BMAL2, PER1, PER2, PER3, CRY1 and CRY2) plays a critical role in rhythm generation, whereas delays imposed by post-translational modifications (PTMs) are important for determining the period (tau) of the rhythms (tau refers to the period of a rhythm and is the length, in time, of one complete cycle). A diurnal rhythm is synchronized with the day/night cycle, while the ultradian and infradian rhythms have a period shorter and longer than 24 hours, respectively. Disruptions in the circadian rhythms contribute to the pathology of cardiovascular diseases, cancer, metabolic syndromes and aging. A transcription/translation feedback loop (TTFL) forms the core of the molecular circadian clock mechanism. Transcription factors, CLOCK or NPAS2 and BMAL1 or BMAL2, form the positive limb of the feedback loop, act in the form of a heterodimer and activate the transcription of core clock genes and clock-controlled genes (involved in key metabolic processes), harboring E-box elements (5'-CACGTG-3') within their promoters. The core clock genes: PER1/2/3 and CRY1/2 which are transcriptional repressors form the negative limb of the feedback loop and interact with the CLOCK|NPAS2-BMAL1|BMAL2 heterodimer inhibiting its activity and thereby negatively regulating their own expression. This heterodimer also activates nuclear receptors NR1D1/2 and RORA/B/G, which form a second feedback loop and which activate and repress BMAL1 transcription, respectively. CRY1 and CRY2 have redundant functions but also differential and selective contributions at least in defining the pace of the SCN circadian clock and its circadian transcriptional outputs. Less potent transcriptional repressor in cerebellum and liver than CRY1, though less effective in lengthening the period of the SCN oscillator. Seems to play a critical role in tuning SCN circadian period by opposing the action of CRY1. With CRY1, dispensable for circadian rhythm generation but necessary for the development of intercellular networks for rhythm synchrony. May mediate circadian regulation of cAMP signaling and gluconeogenesis by blocking glucagon-mediated increases in intracellular cAMP concentrations and in CREB1 phosphorylation. Besides its role in the maintenance of the circadian clock, is also involved in the regulation of other processes. Plays a key role in glucose and lipid metabolism modulation, in part, through the transcriptional regulation of genes involved in these pathways, such as LEP or ACSL4. Represses glucocorticoid receptor NR3C1/GR-induced transcriptional activity by binding to glucocorticoid response elements (GREs). Represses the CLOCK-BMAL1 induced transcription of BHLHE40/DEC1. Represses the CLOCK-BMAL1 induced transcription of NAMPT. Represses PPARD and its target genes in the skeletal muscle and limits exercise capacity. Represses the transcriptional activity of NR1I2. The chain is Cryptochrome-2 (CRY2) from Homo sapiens (Human).